A 1381-amino-acid chain; its full sequence is Hepatocyte growth factor receptor (1381 aa).

The N-terminal stretch at 1-24 (MKAPAVLAPGILVLLFTLVQRSNG) is a signal peptide. Topologically, residues 25–934 (ECKEALTKSE…VQPDQNFTGL (910 aa)) are extracellular. Positions 27–515 (KEALTKSEMN…TGKKITKIPL (489 aa)) constitute a Sema domain. The N-linked (GlcNAc...) asparagine glycan is linked to N45. 4 disulfides stabilise this stretch: C95/C101, C98/C160, C133/C141, and C172/C175. N-linked (GlcNAc...) asparagine glycosylation is present at N106. N149 is a glycosylation site (N-linked (GlcNAc...) asparagine). N202 carries N-linked (GlcNAc...) asparagine glycosylation. Cystine bridges form between C298–C363 and C385–C397. N399 carries an N-linked (GlcNAc...) asparagine glycan. Intrachain disulfides connect C520/C538, C526/C561, C529/C545, and C541/C551. 3 IPT/TIG domains span residues 563–655 (PTIY…FSYV), 657–739 (PIIT…FSYR), and 742–836 (PIVY…LIYV). A glycan (O-linked (Man) threonine) is linked at T582. Residues N607 and N635 are each glycosylated (N-linked (GlcNAc...) asparagine). O-linked (Man) threonine glycosylation is found at T676 and T761. N-linked (GlcNAc...) asparagine glycosylation is found at N785, N879, and N930. A helical membrane pass occupies residues 935 to 955 (VAGVVSISIALLLLLGLFLWL). At 956 to 1381 (KKKKQIKDLG…QDNTDGEVDT (426 aa)) the chain is on the cytoplasmic side. Position 966 is a phosphoserine (S966). T977 is modified (phosphothreonine). Phosphoserine is present on residues S990, S997, and S1000. At Y1003 the chain carries Phosphotyrosine. Positions 1078–1345 (VHFNEVIGRG…RISAIFSTFI (268 aa)) constitute a Protein kinase domain. ATP contacts are provided by residues 1084–1092 (IGRGHFGCV) and K1110. D1204 serves as the catalytic Proton acceptor. The interaction with RANBP9 stretch occupies residues 1212 to 1381 (LDEKFTVKVA…QDNTDGEVDT (170 aa)). At Y1230 the chain carries Phosphotyrosine. 2 positions are modified to phosphotyrosine; by autocatalysis: Y1234 and Y1235. Phosphothreonine is present on T1289. Residues 1320–1359 (WHPKAEMRPSFSELVSRISAIFSTFIGEHYVHVNATYVNV) form an interaction with MUC20 region. 2 positions are modified to phosphotyrosine; by autocatalysis: Y1349 and Y1356. Phosphotyrosine is present on Y1365.

The protein belongs to the protein kinase superfamily. Tyr protein kinase family. Heterodimer made of an alpha chain (50 kDa) and a beta chain (145 kDa) which are disulfide linked. Binds PLXNB1. Interacts when phosphorylated with downstream effectors including STAT3, PIK3R1, SRC, PCLG1, GRB2 and GAB1. Interacts with SPSB1, SPSB2 and SPSB4. Interacts with INPP5D/SHIP1. When phosphorylated at Tyr-1356, interacts with INPPL1/SHIP2. Interacts with RANBP9 and RANBP10, as well as SPSB1, SPSB2, SPSB3 and SPSB4. SPSB1 binding occurs in the presence and in the absence of HGF, however HGF treatment has a positive effect on this interaction. Interacts with MUC20; prevents interaction with GRB2 and suppresses hepatocyte growth factor-induced cell proliferation. Interacts with GRB10. Interacts with PTPN1 and PTPN2. Interacts with HSP90AA1 and HSP90AB1; the interaction suppresses MET kinase activity. Interacts with tensin TNS3. Interacts (when phosphorylated) with tensin TNS4 (via SH2 domain); the interaction increases MET protein stability by inhibiting MET endocytosis and subsequent lysosomal degradation. Post-translationally, autophosphorylated in response to ligand binding on Tyr-1234 and Tyr-1235 in the kinase domain leading to further phosphorylation of Tyr-1349 and Tyr-1356 in the C-terminal multifunctional docking site. Dephosphorylated by PTPRJ at Tyr-1349 and Tyr-1365. Dephosphorylated by PTPN1 and PTPN2. Ubiquitinated. Ubiquitination by CBL regulates the receptor stability and activity through proteasomal degradation. In terms of processing, O-mannosylation of IPT/TIG domains by TMEM260 is required for protein maturation. O-mannosylated residues are composed of single mannose glycans that are not elongated or modified.

It is found in the membrane. The catalysed reaction is L-tyrosyl-[protein] + ATP = O-phospho-L-tyrosyl-[protein] + ADP + H(+). Functionally, receptor tyrosine kinase that transduces signals from the extracellular matrix into the cytoplasm by binding to hepatocyte growth factor/HGF ligand. Regulates many physiological processes including proliferation, scattering, morphogenesis and survival. Ligand binding at the cell surface induces autophosphorylation of MET on its intracellular domain that provides docking sites for downstream signaling molecules. Following activation by ligand, interacts with the PI3-kinase subunit PIK3R1, PLCG1, SRC, GRB2, STAT3 or the adapter GAB1. Recruitment of these downstream effectors by MET leads to the activation of several signaling cascades including the RAS-ERK, PI3 kinase-AKT, or PLCgamma-PKC. The RAS-ERK activation is associated with the morphogenetic effects while PI3K/AKT coordinates prosurvival effects. During embryonic development, MET signaling plays a role in gastrulation, development and migration of muscles and neuronal precursors, angiogenesis and kidney formation. In adults, participates in wound healing as well as organ regeneration and tissue remodeling. Also promotes differentiation and proliferation of hematopoietic cells. The protein is Hepatocyte growth factor receptor (MET) of Callithrix jacchus (White-tufted-ear marmoset).